The following is a 359-amino-acid chain: 2-epi-5-epi-valiolone 7-kinase (359 aa).

The segment at 28–48 (GGLGEVHTTPSPGHARRPGAG) is disordered.

The protein belongs to the ROK (NagC/XylR) family.

The catalysed reaction is 2-epi-5-epi-valiolone + ATP = 2-epi-5-epi-valiolone 7-phosphate + ADP + H(+). Its function is as follows. Catalyzes the conversion of 2-epi-5-epi-valiolone to 2-epi-5-epi-valiolone 7-phosphate. Involved in the biosynthesis of the acarviose moiety of the alpha-glucosidase inhibitor acarbose. The polypeptide is 2-epi-5-epi-valiolone 7-kinase (Actinoplanes sp. (strain ATCC 31044 / CBS 674.73 / SE50/110)).